The following is a 419-amino-acid chain: UDP-N-acetylglucosamine 1-carboxyvinyltransferase 2 (419 aa).

A phosphoenolpyruvate-binding site is contributed by 22-23; it reads KN. Arg92 lines the UDP-N-acetyl-alpha-D-glucosamine pocket. Cys116 (proton donor) is an active-site residue. Cys116 is subject to 2-(S-cysteinyl)pyruvic acid O-phosphothioketal. UDP-N-acetyl-alpha-D-glucosamine-binding positions include 121–125, Asp306, and Ile328; that span reads RPIDL.

The protein belongs to the EPSP synthase family. MurA subfamily.

The protein localises to the cytoplasm. The enzyme catalyses phosphoenolpyruvate + UDP-N-acetyl-alpha-D-glucosamine = UDP-N-acetyl-3-O-(1-carboxyvinyl)-alpha-D-glucosamine + phosphate. Its pathway is cell wall biogenesis; peptidoglycan biosynthesis. Cell wall formation. Adds enolpyruvyl to UDP-N-acetylglucosamine. The protein is UDP-N-acetylglucosamine 1-carboxyvinyltransferase 2 of Streptococcus pyogenes serotype M3 (strain ATCC BAA-595 / MGAS315).